Here is a 211-residue protein sequence, read N- to C-terminus: ATP phosphoribosyltransferase (211 aa).

Belongs to the ATP phosphoribosyltransferase family. Short subfamily. Heteromultimer composed of HisG and HisZ subunits.

Its subcellular location is the cytoplasm. The catalysed reaction is 1-(5-phospho-beta-D-ribosyl)-ATP + diphosphate = 5-phospho-alpha-D-ribose 1-diphosphate + ATP. It functions in the pathway amino-acid biosynthesis; L-histidine biosynthesis; L-histidine from 5-phospho-alpha-D-ribose 1-diphosphate: step 1/9. In terms of biological role, catalyzes the condensation of ATP and 5-phosphoribose 1-diphosphate to form N'-(5'-phosphoribosyl)-ATP (PR-ATP). Has a crucial role in the pathway because the rate of histidine biosynthesis seems to be controlled primarily by regulation of HisG enzymatic activity. The chain is ATP phosphoribosyltransferase from Bacillus cereus (strain ATCC 10987 / NRS 248).